A 374-amino-acid polypeptide reads, in one-letter code: Chaperone protein DnaJ (374 aa).

One can recognise a J domain in the interval 5 to 70 (DYYEVLGISR…SKRAAYDQFG (66 aa)). A CR-type zinc finger spans residues 129–207 (GKTVKINIPG…CHGQGRVRQE (79 aa)). Residues C142, C145, C159, C162, C181, C184, C195, and C198 each contribute to the Zn(2+) site. CXXCXGXG motif repeat units lie at residues 142-149 (CEACDGSG), 159-166 (CGTCQGMG), 181-188 (CPTCRGSG), and 195-202 (CKSCHGQG). Residues 216-238 (PGVDTGDRIRLSGEGEMGVDGGP) form a disordered region.

This sequence belongs to the DnaJ family. Homodimer. The cofactor is Zn(2+).

It is found in the cytoplasm. Its function is as follows. Participates actively in the response to hyperosmotic and heat shock by preventing the aggregation of stress-denatured proteins and by disaggregating proteins, also in an autonomous, DnaK-independent fashion. Unfolded proteins bind initially to DnaJ; upon interaction with the DnaJ-bound protein, DnaK hydrolyzes its bound ATP, resulting in the formation of a stable complex. GrpE releases ADP from DnaK; ATP binding to DnaK triggers the release of the substrate protein, thus completing the reaction cycle. Several rounds of ATP-dependent interactions between DnaJ, DnaK and GrpE are required for fully efficient folding. Also involved, together with DnaK and GrpE, in the DNA replication of plasmids through activation of initiation proteins. The chain is Chaperone protein DnaJ from Marinobacter nauticus (strain ATCC 700491 / DSM 11845 / VT8) (Marinobacter aquaeolei).